A 176-amino-acid chain; its full sequence is Peptidoglycan-associated lipoprotein (176 aa).

Residues 1 to 21 (MKAGSFYKLGLLVASAVLVAA) form the signal peptide. Residue C22 is the site of N-palmitoyl cysteine attachment. The S-diacylglycerol cysteine moiety is linked to residue C22. The OmpA-like domain maps to 60-176 (YTTQAPHNQL…RVEFIYEATR (117 aa)).

The protein belongs to the Pal lipoprotein family. In terms of assembly, the Tol-Pal system is composed of five core proteins: the inner membrane proteins TolA, TolQ and TolR, the periplasmic protein TolB and the outer membrane protein Pal. They form a network linking the inner and outer membranes and the peptidoglycan layer.

The protein resides in the cell outer membrane. Its function is as follows. Part of the Tol-Pal system, which plays a role in outer membrane invagination during cell division and is important for maintaining outer membrane integrity. Very strongly associated with the peptidoglycan. In Legionella pneumophila, this protein is Peptidoglycan-associated lipoprotein.